Reading from the N-terminus, the 372-residue chain is Tetraacyldisaccharide 4'-kinase (372 aa).

65–72 (TVGGTGKT) lines the ATP pocket. The segment at 351–372 (QSTATGMADGLDKEHQDGQPAA) is disordered. Residues 360-372 (GLDKEHQDGQPAA) show a composition bias toward basic and acidic residues.

Belongs to the LpxK family.

It carries out the reaction a lipid A disaccharide + ATP = a lipid IVA + ADP + H(+). It functions in the pathway glycolipid biosynthesis; lipid IV(A) biosynthesis; lipid IV(A) from (3R)-3-hydroxytetradecanoyl-[acyl-carrier-protein] and UDP-N-acetyl-alpha-D-glucosamine: step 6/6. Transfers the gamma-phosphate of ATP to the 4'-position of a tetraacyldisaccharide 1-phosphate intermediate (termed DS-1-P) to form tetraacyldisaccharide 1,4'-bis-phosphate (lipid IVA). The polypeptide is Tetraacyldisaccharide 4'-kinase (Cupriavidus metallidurans (strain ATCC 43123 / DSM 2839 / NBRC 102507 / CH34) (Ralstonia metallidurans)).